Reading from the N-terminus, the 282-residue chain is Pantothenate synthetase (282 aa).

30–37 (MGYLHEGH) contributes to the ATP binding site. H37 serves as the catalytic Proton donor. Q61 contributes to the (R)-pantoate binding site. Beta-alanine is bound at residue Q61. Residue 147-150 (GMKD) participates in ATP binding. Q153 is a (R)-pantoate binding site. ATP is bound by residues V176 and 184-187 (KSSR).

The protein belongs to the pantothenate synthetase family. As to quaternary structure, homodimer.

The protein resides in the cytoplasm. The enzyme catalyses (R)-pantoate + beta-alanine + ATP = (R)-pantothenate + AMP + diphosphate + H(+). Its pathway is cofactor biosynthesis; (R)-pantothenate biosynthesis; (R)-pantothenate from (R)-pantoate and beta-alanine: step 1/1. Catalyzes the condensation of pantoate with beta-alanine in an ATP-dependent reaction via a pantoyl-adenylate intermediate. In Bacillus thuringiensis subsp. konkukian (strain 97-27), this protein is Pantothenate synthetase.